A 1093-amino-acid polypeptide reads, in one-letter code: Fused isobutyryl-CoA mutase (1093 aa).

Positions 1 to 20 (MTDLSDVSRTAAAKPPAVPG) are disordered. Positions 26 to 156 (KVRFVTAASL…AGMITDMAQR (131 aa)) constitute a B12-binding domain. An adenosylcob(III)alamin-binding site is contributed by histidine 39. The segment at 169 to 417 (LDTVVAGDRR…YQGLVGALGA (249 aa)) is GTPase chaperone MeaI. 219–224 (GAGKSS) serves as a coordination point for GTP. Mg(2+) contacts are provided by serine 223, isoleucine 248, aspartate 249, and aspartate 262. Arginine 265 is a GTP binding site. 2 residues coordinate Mg(2+): glutamate 310 and threonine 311. 357–360 (NKFD) lines the GTP pocket. The linker stretch occupies residues 418-579 (RGMSLKPGTL…MRENVPGSFP (162 aa)). The substrate site is built by phenylalanine 587, arginine 622, arginine 728, tyrosine 772, serine 821, arginine 856, and lysine 861. GTP contacts are provided by glutamate 973 and asparagine 1092.

It belongs to the IcmF family. In terms of assembly, homodimer. Adenosylcob(III)alamin serves as cofactor. Requires Mg(2+) as cofactor.

The catalysed reaction is 2-methylpropanoyl-CoA = butanoyl-CoA. The enzyme catalyses 3-methylbutanoyl-CoA = 2,2-dimethylpropanoyl-CoA. It catalyses the reaction GTP + H2O = GDP + phosphate + H(+). Is prone to inactivation during catalytic turnover due to the occasional loss of the 5'-deoxyadenosine moiety and formation of the inactive cob(II)alamin cofactor in its active site. The GTPase activity of IcmF powers the ejection of the inactive cofactor and requires the presence of an acceptor protein, adenosyltransferase (ATR), for receiving it. ATR, in turn, catalyzes an adenosylation reaction converting cob(II)alamin in the presence of ATP and a reductant to the active AdoCbl cofactor. The repaired cofactor is then reloaded onto IcmF in a GTPase-gated step, regenerating active enzyme. The GTPase activity of IcmF is significantly decreased in the presence of excess of AdoCbl or cob(II)alamin and is higher in the apoenzyme state, indicating that the G-domain senses the presence and identity of the cofactor in the mutase active site. Catalyzes the reversible interconversion of isobutyryl-CoA and n-butyryl-CoA, and to a much lesser extent, of pivalyl-CoA and isovaleryl-CoA, using radical chemistry. Also exhibits GTPase activity, associated with its G-protein domain (MeaI) that functions as a chaperone that assists cofactor delivery and proper holo-enzyme assembly. The G-domain of IcmF also has a role in its cofactor repair. Does not display ATPase activity. In Cupriavidus metallidurans (strain ATCC 43123 / DSM 2839 / NBRC 102507 / CH34) (Ralstonia metallidurans), this protein is Fused isobutyryl-CoA mutase.